Reading from the N-terminus, the 469-residue chain is 6-phosphogluconate dehydrogenase, NADP(+)-dependent, decarboxylating (469 aa).

Residues 10–15 (GLAVMG), 33–35 (NRS), 74–76 (VKA), and N102 each bind NADP(+). Substrate is bound by residues N102 and 128 to 130 (SGG). Residue K182 is the Proton acceptor of the active site. Substrate is bound at residue 185-186 (HN). E189 functions as the Proton donor in the catalytic mechanism. Y190, K260, R287, R446, and H452 together coordinate substrate.

Belongs to the 6-phosphogluconate dehydrogenase family. In terms of assembly, homodimer.

It carries out the reaction 6-phospho-D-gluconate + NADP(+) = D-ribulose 5-phosphate + CO2 + NADPH. Its pathway is carbohydrate degradation; pentose phosphate pathway; D-ribulose 5-phosphate from D-glucose 6-phosphate (oxidative stage): step 3/3. Its function is as follows. Catalyzes the oxidative decarboxylation of 6-phosphogluconate to ribulose 5-phosphate and CO(2), with concomitant reduction of NADP to NADPH. Is the predominant 6-P-gluconate dehydrogenase isoenzyme in B.subtilis during growth on glucose and gluconate. The chain is 6-phosphogluconate dehydrogenase, NADP(+)-dependent, decarboxylating (gndA) from Bacillus subtilis (strain 168).